Reading from the N-terminus, the 251-residue chain is Fibroblast growth factor 23 (251 aa).

Positions 1–24 are cleaved as a signal peptide; the sequence is MLGARLRLWVCALCSVCSMSVLRA. A disulfide bridge connects residues cysteine 95 and cysteine 113. O-linked (GalNAc) threonine glycosylation is found at threonine 171 and threonine 178. Positions 172–221 are disordered; it reads PIPRRHTRSAEDDSERDPLNVLKPRARMTPAPASCSQELPSAEDNSPMAS. Serine 180 is modified (phosphoserine; by FAM20C). The segment covering 205–219 has biased composition (polar residues); it reads SCSQELPSAEDNSPM.

It belongs to the heparin-binding growth factors family. Interacts with FGFR1, FGFR2, FGFR3 and FGFR4. Affinity between fibroblast growth factors (FGFs) and their receptors is increased by KL and heparan sulfate glycosaminoglycans that function as coreceptors. Post-translationally, following secretion this protein is inactivated by cleavage into a N-terminal fragment and a C-terminal fragment. The processing is effected by proprotein convertases. In terms of processing, O-glycosylated at Thr-171 and Thr-178 by GALNT3 and glycosylation of Thr-178 requires previous glycosylation at Thr171. Glycosylation is necessary for secretion; it blocks processing by proprotein convertases when the O-glycan is alpha 2,6-sialylated. Competition between proprotein convertase cleavage and block of cleavage by O-glycosylation determines the level of secreted active FGF23. Phosphorylation at Ser-180 mediated by FAM20C slows down glycosylation at Thr-178 notably. Expressed in osteogenic cells particularly during phases of active bone remodeling. In adult trabecular bone, expressed in osteocytes and flattened bone-lining cells (inactive osteoblasts).

It localises to the secreted. Its function is as follows. Regulator of phosphate homeostasis. Inhibits renal tubular phosphate transport by reducing SLC34A1 levels. Up-regulates EGR1 expression in the presence of KL. Acts directly on the parathyroid to decrease PTH secretion. Regulator of vitamin-D metabolism. Negatively regulates osteoblast differentiation and matrix mineralization. The chain is Fibroblast growth factor 23 (FGF23) from Homo sapiens (Human).